The sequence spans 494 residues: Probable serine/threonine-protein kinase BSK3 (494 aa).

Gly2 is lipidated: N-myristoyl glycine. The 256-residue stretch at 61–316 folds into the Protein kinase domain; sequence ENIVSEHGEK…SLVQALAPLQ (256 aa). ATP contacts are provided by residues 67 to 75 and Lys89; that span reads HGEKAPNVV. Asp183 (proton acceptor) is an active-site residue. 2 positions are modified to phosphoserine: Ser213 and Ser215. The stretch at 423 to 456 is one TPR repeat; the sequence is PTIYARRCLSYLMNDKAEQALSDAMQALVISPTW.

Interacts with BRI1 and BSL1. Post-translationally, phosphorylated at Ser-213 and Ser-215 by BRI1. Phosphorylation at Ser-215 is required for its function in the regulation of brassinosteroid signaling. Phosphorylation by BRI1 disrupts the interaction between its TPR and kinase domains, thereby increasing the binding between its kinase domain and BSL1.

The protein resides in the cell membrane. It catalyses the reaction L-seryl-[protein] + ATP = O-phospho-L-seryl-[protein] + ADP + H(+). The catalysed reaction is L-threonyl-[protein] + ATP = O-phospho-L-threonyl-[protein] + ADP + H(+). Functionally, probable serine/threonine kinase that acts as a positive regulator of brassinosteroid (BR) signaling downstream of BRI1. This Oryza sativa subsp. japonica (Rice) protein is Probable serine/threonine-protein kinase BSK3.